The chain runs to 1073 residues: Collagen alpha-2(I) chain (1073 aa).

The disordered stretch occupies residues 1-939; it reads APDPGPGPMG…PGPAGGGYDV (939 aa). Composition is skewed to low complexity over residues 100-148, 178-187, and 194-215; these read EPGA…AAGP, EPGPNGAVGP, and PGNN…AGAP. A compositionally biased stretch (pro residues) spans 217–227; the sequence is FPGPRGGPGPQ. Positions 229-239 are enriched in low complexity; the sequence is PQGAAGQRGLA. Over residues 246 to 255 the composition is skewed to gly residues; that stretch reads GVKGDGGPKG. 4 stretches are compositionally biased toward low complexity: residues 296–315, 321–348, 386–399, and 411–423; these read MPGA…PGDA, SGPA…AGPA, APGP…TGAT, and QGAA…QGLP. A compositionally biased stretch (gly residues) spans 424–433; sequence GPAGGAGEAG. Residues 458–468 show a composition bias toward low complexity; the sequence is NPGAAGASGPQ. Gly residues predominate over residues 481–508; that stretch reads GTDGGKGEPGAAGAAGGPGHQGPGGMPG. The segment covering 519–530 has biased composition (basic and acidic residues); it reads KGEKGEAGHRGP. 2 stretches are compositionally biased toward low complexity: residues 561-575 and 584-597; these read SGSF…ARGA and PAGA…PGAD. Gly residues predominate over residues 607–616; the sequence is GPSGGKGESG. Low complexity-rich tracts occupy residues 617-642, 653-680, and 708-729; these read PAGP…TGAR, FPGA…PAGK, and SGEK…SGPL. The span at 745–757 shows a compositional bias: gly residues; the sequence is GSPGGAGGVGEPG. Positions 758 to 774 are enriched in low complexity; it reads RVGPAGPAGARGNLGLP. The span at 811–820 shows a compositional bias: gly residues; that stretch reads GESGPGGAAG. Low complexity predominate over residues 821-836; sequence AVGPAGARGAAGPSGP. Residues 837–851 show a composition bias toward basic and acidic residues; it reads RGEKGVAGEKGERGL. Low complexity-rich tracts occupy residues 857 to 876 and 906 to 917; these read LQGM…AGPN and PGARGPPGYVGP. Pro residues predominate over residues 918 to 932; that stretch reads AGPPGSPGLPGPPGP. The Fibrillar collagen NC1 domain occupies 1039-1073; it reads RTNKPSRLPLLDLAPLDLGGADQEFGLDLGPVCFK.

It belongs to the fibrillar collagen family.

It localises to the secreted. Its subcellular location is the extracellular space. The protein resides in the extracellular matrix. This Epinephelus aeneus (White grouper) protein is Collagen alpha-2(I) chain.